The sequence spans 140 residues: MRIMGLDVGSRTVGVAVSDLLGWTAQGIEIIRINEEEENFGFERLGELVKEYEVTKFVVGLPKNMNNSIGPRAEASMAYGDKIQELFQLPVDYQDERLTTVQAERFLVEQADASRAKRKKVIDKLAAVMILQNYLDAHSR.

The protein belongs to the YqgF nuclease family.

The protein localises to the cytoplasm. Functionally, could be a nuclease involved in processing of the 5'-end of pre-16S rRNA. In Enterococcus faecalis (strain ATCC 700802 / V583), this protein is Putative pre-16S rRNA nuclease.